Reading from the N-terminus, the 271-residue chain is Phosphonoacetaldehyde hydrolase (271 aa).

The active-site Nucleophile is D12. 2 residues coordinate Mg(2+): D12 and A14. The active-site Schiff-base intermediate with substrate is the K54. D188 is a binding site for Mg(2+).

This sequence belongs to the HAD-like hydrolase superfamily. PhnX family. In terms of assembly, homodimer. Requires Mg(2+) as cofactor.

It carries out the reaction phosphonoacetaldehyde + H2O = acetaldehyde + phosphate + H(+). Its function is as follows. Involved in phosphonate degradation. In Vibrio campbellii (strain ATCC BAA-1116), this protein is Phosphonoacetaldehyde hydrolase.